A 725-amino-acid polypeptide reads, in one-letter code: Envelope glycoprotein H (725 aa).

An N-terminal signal peptide occupies residues 1–19 (MKLSLILSIALCSTRVVYA). The Virion surface portion of the chain corresponds to 20-700 (AGAEAPRISR…LVNVRPSMPY (681 aa)). Residues N38 and N50 are each glycosylated (N-linked (GlcNAc...) asparagine; by host). An interaction with gL region spans residues 184–247 (TGYTVTVSLA…QTPDHDLLVV (64 aa)). N319, N459, N621, and N681 each carry an N-linked (GlcNAc...) asparagine; by host glycan. A helical transmembrane segment spans residues 701-721 (SVVVALVIIAILMALGLYRLC). Residues 722–725 (RQKR) are Intravirion-facing.

It belongs to the herpesviridae glycoprotein H family. In terms of assembly, interacts with glycoprotein L (gL); this interaction is necessary for the correct processing and cell surface expression of gH. The heterodimer gH/gL seems to interact with gB trimers during fusion. Post-translationally, N-glycosylated, O-glycosylated, and sialylated.

It localises to the virion membrane. It is found in the host cell membrane. The protein localises to the host endosome membrane. Its function is as follows. The heterodimer glycoprotein H-glycoprotein L is required for the fusion of viral and plasma membranes leading to virus entry into the host cell. Following initial binding to host receptor, membrane fusion is mediated by the fusion machinery composed of gB and the heterodimer gH/gL. May also be involved in the fusion between the virion envelope and the outer nuclear membrane during virion morphogenesis. The chain is Envelope glycoprotein H from Murid herpesvirus 1 (strain Smith) (MuHV-1).